The chain runs to 381 residues: Chaperone protein DnaJ (381 aa).

One can recognise a J domain in the interval 5-70 (DYYEVLGLQK…QKRAAYDQYG (66 aa)). The CR-type zinc finger occupies 133-211 (GTTKDIQINT…CHGEGRVHKK (79 aa)). Zn(2+)-binding residues include Cys146, Cys149, Cys163, Cys166, Cys185, Cys188, Cys199, and Cys202. CXXCXGXG motif repeat units follow at residues 146–153 (CDSCGGSG), 163–170 (CPHCHGSG), 185–192 (CPTCHGSG), and 199–206 (CRSCHGEG).

This sequence belongs to the DnaJ family. As to quaternary structure, homodimer. Zn(2+) is required as a cofactor.

It localises to the cytoplasm. Functionally, participates actively in the response to hyperosmotic and heat shock by preventing the aggregation of stress-denatured proteins and by disaggregating proteins, also in an autonomous, DnaK-independent fashion. Unfolded proteins bind initially to DnaJ; upon interaction with the DnaJ-bound protein, DnaK hydrolyzes its bound ATP, resulting in the formation of a stable complex. GrpE releases ADP from DnaK; ATP binding to DnaK triggers the release of the substrate protein, thus completing the reaction cycle. Several rounds of ATP-dependent interactions between DnaJ, DnaK and GrpE are required for fully efficient folding. Also involved, together with DnaK and GrpE, in the DNA replication of plasmids through activation of initiation proteins. In Haemophilus influenzae (strain 86-028NP), this protein is Chaperone protein DnaJ.